Here is a 312-residue protein sequence, read N- to C-terminus: Ribosomal protein L11 methyltransferase (312 aa).

S-adenosyl-L-methionine-binding residues include Thr-160, Gly-181, Asp-203, and Asn-246.

This sequence belongs to the methyltransferase superfamily. PrmA family.

It is found in the cytoplasm. The catalysed reaction is L-lysyl-[protein] + 3 S-adenosyl-L-methionine = N(6),N(6),N(6)-trimethyl-L-lysyl-[protein] + 3 S-adenosyl-L-homocysteine + 3 H(+). In terms of biological role, methylates ribosomal protein L11. In Staphylococcus aureus (strain COL), this protein is Ribosomal protein L11 methyltransferase.